Reading from the N-terminus, the 479-residue chain is Glycine betaine methyltransferase (479 aa).

It belongs to the trimethylamine methyltransferase family.

It catalyses the reaction Co(I)-[glycine betaine-specific corrinoid protein] + glycine betaine + H(+) = methyl-Co(III)-[glycine betaine-specific corrinoid protein] + N,N-dimethylglycine. Functionally, methyltransferase able to methylate free cob(I)alamin in vitro, using glycine betaine as the methyl donor, yealding methylcobalamin (methylCbl) and dimethylglycine. In vivo, probably carries out the methylation of a corrinoid protein, likely the adjacently encoded DSY3155, with glycine betaine, to then supply methyl groups to tetrahydrofolate (THF) for ultimate conversion to carbon dioxide; oxidation of the methyl group would also provide reducing equivalents for anaerobic respiration. Thus, may function in the pathway that allows anaerobic methylotrophic growth of D.hafniense using glycine betaine. Cannot use quaternary amines such as carnitine and choline as substrates, nor tertiary amines such as dimethylglycine or trimethylamine. The chain is Glycine betaine methyltransferase from Desulfitobacterium hafniense (strain Y51).